The sequence spans 308 residues: UDP-3-O-acyl-N-acetylglucosamine deacetylase (308 aa).

Residues H77, H233, and D237 each coordinate Zn(2+). H260 serves as the catalytic Proton donor.

The protein belongs to the LpxC family. Zn(2+) is required as a cofactor.

The catalysed reaction is a UDP-3-O-[(3R)-3-hydroxyacyl]-N-acetyl-alpha-D-glucosamine + H2O = a UDP-3-O-[(3R)-3-hydroxyacyl]-alpha-D-glucosamine + acetate. The protein operates within glycolipid biosynthesis; lipid IV(A) biosynthesis; lipid IV(A) from (3R)-3-hydroxytetradecanoyl-[acyl-carrier-protein] and UDP-N-acetyl-alpha-D-glucosamine: step 2/6. Its function is as follows. Catalyzes the hydrolysis of UDP-3-O-myristoyl-N-acetylglucosamine to form UDP-3-O-myristoylglucosamine and acetate, the committed step in lipid A biosynthesis. This chain is UDP-3-O-acyl-N-acetylglucosamine deacetylase, found in Nitratidesulfovibrio vulgaris (strain ATCC 29579 / DSM 644 / CCUG 34227 / NCIMB 8303 / VKM B-1760 / Hildenborough) (Desulfovibrio vulgaris).